Consider the following 511-residue polypeptide: Acidic amino acid decarboxylase GADL1 (511 aa).

At Lys-323 the chain carries N6-(pyridoxal phosphate)lysine.

It belongs to the group II decarboxylase family. In terms of assembly, homodimer. It depends on pyridoxal 5'-phosphate as a cofactor.

The catalysed reaction is L-aspartate + H(+) = beta-alanine + CO2. It carries out the reaction 3-sulfino-L-alanine + H(+) = hypotaurine + CO2. Catalyzes the decarboxylation of L-aspartate, 3-sulfino-L-alanine (cysteine sulfinic acid), and L-cysteate to beta-alanine, hypotaurine and taurine, respectively. The preferred substrate is L-aspartate. Does not exhibit any decarboxylation activity toward glutamate. The polypeptide is Acidic amino acid decarboxylase GADL1 (gadl1) (Xenopus tropicalis (Western clawed frog)).